The chain runs to 217 residues: Choline transport system permease protein OpuBB (217 aa).

The ABC transmembrane type-1 domain maps to 19-198 (TYEHITISLI…ILAIVIDYVL (180 aa)). The next 6 membrane-spanning stretches (helical) occupy residues 23–43 (ITISLIAVILGVLVAVPLGVV), 52–74 (GTIIGIVNIIQTLPSLAILAFFI), 84–101 (AIVALFFYSVLPILRNTY), 128–148 (LVELPLAAPVIMAGIRTSTIY), 150–170 (IGWATLASFIGGGGLGDYIFI), and 180–200 (IIGGAVPVTILAIVIDYVLAV).

Belongs to the binding-protein-dependent transport system permease family. CysTW subfamily.

It localises to the cell membrane. Functionally, involved in a high affinity multicomponent binding-protein-dependent transport system for choline; probably responsible for the translocation of the substrate across the membrane. The polypeptide is Choline transport system permease protein OpuBB (opuBB) (Bacillus subtilis (strain 168)).